Here is a 76-residue protein sequence, read N- to C-terminus: UPF0352 protein ECA2748 (76 aa).

This sequence belongs to the UPF0352 family.

This Pectobacterium atrosepticum (strain SCRI 1043 / ATCC BAA-672) (Erwinia carotovora subsp. atroseptica) protein is UPF0352 protein ECA2748.